Consider the following 421-residue polypeptide: UDP-N-acetylglucosamine 1-carboxyvinyltransferase (421 aa).

Residue 22 to 23 (KN) participates in phosphoenolpyruvate binding. Position 92 (Arg92) interacts with UDP-N-acetyl-alpha-D-glucosamine. The Proton donor role is filled by Asp116. UDP-N-acetyl-alpha-D-glucosamine-binding positions include 121 to 125 (RPIDQ), Asp307, and Ile330.

The protein belongs to the EPSP synthase family. MurA subfamily.

The protein localises to the cytoplasm. It carries out the reaction phosphoenolpyruvate + UDP-N-acetyl-alpha-D-glucosamine = UDP-N-acetyl-3-O-(1-carboxyvinyl)-alpha-D-glucosamine + phosphate. Its pathway is cell wall biogenesis; peptidoglycan biosynthesis. Functionally, cell wall formation. Adds enolpyruvyl to UDP-N-acetylglucosamine. In Lactobacillus johnsonii (strain CNCM I-12250 / La1 / NCC 533), this protein is UDP-N-acetylglucosamine 1-carboxyvinyltransferase.